The following is a 378-amino-acid chain: MLNIYRSVLFPIIFSGLKADPEWAHHQVLNMLSFIDTHSDSQLVNSIRTTMEKLFCFKDTRLEQNLWELNFKNPVGLAPGYDKDGQAINMWPQLGFGFAELGTVTFHQQPGNAQPRLFRLPKDKAVLNRMGFNNKGAAALAKKFQIQNKKNSFFFPYGVNIGKSKITPLEAAATDYLESFRLLKNCGDYFVVNVSSPNTPGLRSLQNTDSLSKILEVLPRENERKKPILVKIAPDLENEAIAAIIDLIKEYKISGIIATNTTINREKLTTKILPATGKPIIEEAGGISGKPLTKRSTEIIKFIWQETKGKLPIIGVGGIFTSEDAWNKITAGASLIQIYTGLVYQGPGIVKQILQGLLKKLDEHGLNSISEAVGLANK.

Residues 79 to 83 (PGYDK) and Thr103 each bind FMN. Residue Lys83 coordinates substrate. 128 to 132 (NRMGF) contacts substrate. FMN is bound by residues Asn160 and Asn193. Residue Asn193 participates in substrate binding. Residue Ser196 is the Nucleophile of the active site. Asn198 lines the substrate pocket. The FMN site is built by Lys231 and Thr259. 260-261 (NT) is a binding site for substrate. FMN-binding positions include Gly289, Gly318, and 339 to 340 (YT).

Belongs to the dihydroorotate dehydrogenase family. Type 2 subfamily. In terms of assembly, monomer. The cofactor is FMN.

Its subcellular location is the cell membrane. The enzyme catalyses (S)-dihydroorotate + a quinone = orotate + a quinol. It functions in the pathway pyrimidine metabolism; UMP biosynthesis via de novo pathway; orotate from (S)-dihydroorotate (quinone route): step 1/1. Catalyzes the conversion of dihydroorotate to orotate with quinone as electron acceptor. The sequence is that of Dihydroorotate dehydrogenase (quinone) from Trichodesmium erythraeum (strain IMS101).